A 320-amino-acid polypeptide reads, in one-letter code: Thiamine thiazole synthase (320 aa).

Residues Cys-82, 103–104 (EA), Gly-111, and Val-176 contribute to the substrate site. The residue at position 209 (Cys-209) is a 2,3-didehydroalanine (Cys). Substrate contacts are provided by residues Asp-211, His-226, Met-278, and 288–290 (RMG).

This sequence belongs to the THI4 family. Homooctamer. It depends on Fe cation as a cofactor. In terms of processing, during the catalytic reaction, a sulfide is transferred from Cys-209 to a reaction intermediate, generating a dehydroalanine residue.

It localises to the cytoplasm. It is found in the nucleus. The enzyme catalyses [ADP-thiazole synthase]-L-cysteine + glycine + NAD(+) = [ADP-thiazole synthase]-dehydroalanine + ADP-5-ethyl-4-methylthiazole-2-carboxylate + nicotinamide + 3 H2O + 2 H(+). Its function is as follows. Involved in biosynthesis of the thiamine precursor thiazole. Catalyzes the conversion of NAD and glycine to adenosine diphosphate 5-(2-hydroxyethyl)-4-methylthiazole-2-carboxylic acid (ADT), an adenylated thiazole intermediate. The reaction includes an iron-dependent sulfide transfer from a conserved cysteine residue of the protein to a thiazole intermediate. The enzyme can only undergo a single turnover, which suggests it is a suicide enzyme. May have additional roles in adaptation to various stress conditions and in DNA damage tolerance. This chain is Thiamine thiazole synthase (sti35), found in Fusarium oxysporum f. sp. lycopersici (strain 4287 / CBS 123668 / FGSC 9935 / NRRL 34936) (Fusarium vascular wilt of tomato).